The chain runs to 432 residues: Mitochondrial distribution and morphology protein 12 (432 aa).

The SMP-LTD domain occupies 1–432; it reads MSIEVDWRAA…VFPSFWTFLI (432 aa). Disordered stretches follow at residues 182-273 and 354-377; these read WTDP…PRMR and QQEA…PKRQ. Low complexity predominate over residues 214 to 234; that stretch reads TSNPTSRPSTSSTLPSHPSAS. 2 stretches are compositionally biased toward basic and acidic residues: residues 243-253 and 355-364; these read TGKEHGSLAED and QEARGQDDRP.

Belongs to the MDM12 family. Component of the ER-mitochondria encounter structure (ERMES) or MDM complex, composed of mmm1, mdm10, mdm12 and mdm34. A mmm1 homodimer associates with one molecule of mdm12 on each side in a pairwise head-to-tail manner, and the SMP-LTD domains of mmm1 and mdm12 generate a continuous hydrophobic tunnel for phospholipid trafficking.

It is found in the mitochondrion outer membrane. The protein resides in the endoplasmic reticulum membrane. Functionally, component of the ERMES/MDM complex, which serves as a molecular tether to connect the endoplasmic reticulum (ER) and mitochondria. Components of this complex are involved in the control of mitochondrial shape and protein biogenesis, and function in nonvesicular lipid trafficking between the ER and mitochondria. Mdm12 is required for the interaction of the ER-resident membrane protein MMM1 and the outer mitochondrial membrane-resident beta-barrel protein mdm10. The mdm12-mmm1 subcomplex functions in the major beta-barrel assembly pathway that is responsible for biogenesis of all mitochondrial outer membrane beta-barrel proteins, and acts in a late step after the SAM complex. The mdm10-mdm12-mmm1 subcomplex further acts in the TOM40-specific pathway after the action of the mdm12-mmm1 complex. Essential for establishing and maintaining the structure of mitochondria and maintenance of mtDNA nucleoids. This chain is Mitochondrial distribution and morphology protein 12, found in Aspergillus flavus (strain ATCC 200026 / FGSC A1120 / IAM 13836 / NRRL 3357 / JCM 12722 / SRRC 167).